Consider the following 184-residue polypeptide: uncharacterized protein (184 aa).

It belongs to the eIF-2B alpha/beta/delta subunits family.

This is an uncharacterized protein from Rhodospirillum rubrum.